Reading from the N-terminus, the 138-residue chain is Cell division protein SepF (138 aa).

This sequence belongs to the SepF family. Homodimer. Interacts with FtsZ.

The protein localises to the cytoplasm. In terms of biological role, cell division protein that is part of the divisome complex and is recruited early to the Z-ring. Probably stimulates Z-ring formation, perhaps through the cross-linking of FtsZ protofilaments. Its function overlaps with FtsA. The sequence is that of Cell division protein SepF from Limosilactobacillus reuteri (strain DSM 20016) (Lactobacillus reuteri).